Consider the following 374-residue polypeptide: UDP-N-acetylglucosamine--N-acetylmuramyl-(pentapeptide) pyrophosphoryl-undecaprenol N-acetylglucosamine transferase (374 aa).

UDP-N-acetyl-alpha-D-glucosamine is bound by residues Thr-13–Gly-15, Asn-124, Arg-165, Ser-193, and Gln-294.

Belongs to the glycosyltransferase 28 family. MurG subfamily.

Its subcellular location is the cell inner membrane. The catalysed reaction is di-trans,octa-cis-undecaprenyl diphospho-N-acetyl-alpha-D-muramoyl-L-alanyl-D-glutamyl-meso-2,6-diaminopimeloyl-D-alanyl-D-alanine + UDP-N-acetyl-alpha-D-glucosamine = di-trans,octa-cis-undecaprenyl diphospho-[N-acetyl-alpha-D-glucosaminyl-(1-&gt;4)]-N-acetyl-alpha-D-muramoyl-L-alanyl-D-glutamyl-meso-2,6-diaminopimeloyl-D-alanyl-D-alanine + UDP + H(+). Its pathway is cell wall biogenesis; peptidoglycan biosynthesis. Functionally, cell wall formation. Catalyzes the transfer of a GlcNAc subunit on undecaprenyl-pyrophosphoryl-MurNAc-pentapeptide (lipid intermediate I) to form undecaprenyl-pyrophosphoryl-MurNAc-(pentapeptide)GlcNAc (lipid intermediate II). The polypeptide is UDP-N-acetylglucosamine--N-acetylmuramyl-(pentapeptide) pyrophosphoryl-undecaprenol N-acetylglucosamine transferase (Rhizobium etli (strain ATCC 51251 / DSM 11541 / JCM 21823 / NBRC 15573 / CFN 42)).